A 1230-amino-acid chain; its full sequence is Myosin-1 (1230 aa).

Residues 1 to 32 form a disordered region; that stretch reads MGISRRPKADKNASAADSAPGGKPNIQKAQFD. One can recognise a Myosin motor domain in the interval 39–713; that stretch reads VGVSDLTLIS…TLFALEHMRD (675 aa). 132–139 serves as a coordination point for ATP; sequence GESGAGKT. Positions 403–485 are actin-binding; sequence SIGILDIYGF…PGVFSAMKDA (83 aa). IQ domains lie at 717–737 and 738–763; these read HNMA…RIEA and ATRI…KGHQ. The 191-residue stretch at 771–961 folds into the TH1 domain; sequence RRRYSLLGSR…TIHTQAGEPP (191 aa). Disordered stretches follow at residues 945 to 1018, 1033 to 1065, and 1116 to 1230; these read QDHY…AARP, TRNT…PVSK, and AYLE…EDDW. Over residues 1033–1045 the composition is skewed to polar residues; the sequence is TRNTSVQSTQSTR. Pro residues-rich tracts occupy residues 1047–1062 and 1122–1142; these read VPPP…PPAP and TPPP…PGPP. One can recognise an SH3 domain in the interval 1064–1123; the sequence is SKEPQYRVLYEFAGQSANEFSLKQGEIVTVLQKETNGWWLTKNVRGQGWAPTAYLEEVTP. Over residues 1179–1214 the composition is skewed to low complexity; it reads RDSGMSISSNGSGNNSGRSTPTPSLAGGLAEALRAR.

It belongs to the TRAFAC class myosin-kinesin ATPase superfamily. Myosin family.

The protein localises to the cytoplasm. Its subcellular location is the cytoskeleton. It localises to the actin patch. In terms of biological role, type-I myosin implicated in the organization of the actin cytoskeleton. Required for proper actin cytoskeleton polarization. At the cell cortex, assembles in patch-like structures together with proteins from the actin-polymerizing machinery and promotes actin assembly. Functions as actin nucleation-promoting factor (NPF) for the Arp2/3 complex. The polypeptide is Myosin-1 (myoA) (Sclerotinia sclerotiorum (strain ATCC 18683 / 1980 / Ss-1) (White mold)).